We begin with the raw amino-acid sequence, 221 residues long: Iron-sulfur cluster repair protein YtfE (221 aa).

It belongs to the RIC family. YtfE subfamily. Homodimer.

The protein localises to the cytoplasm. Functionally, di-iron-containing protein involved in the repair of iron-sulfur clusters damaged by oxidative and nitrosative stress conditions. The sequence is that of Iron-sulfur cluster repair protein YtfE from Yersinia pseudotuberculosis serotype IB (strain PB1/+).